We begin with the raw amino-acid sequence, 122 residues long: uncharacterized protein (122 aa).

A run of 2 helical transmembrane segments spans residues Ile34 to Val54 and Phe91 to Phe111.

The protein resides in the cell membrane. This is an uncharacterized protein from Mycoplasma pneumoniae (strain ATCC 29342 / M129 / Subtype 1) (Mycoplasmoides pneumoniae).